The sequence spans 177 residues: FMRFamide-like neuropeptides 7 (177 aa).

Positions 1 to 19 are cleaved as a signal peptide; that stretch reads MLGSRFLLLALGLLVLVLA. Residues 20–49 constitute a propeptide that is removed on maturation; sequence EESAEQQVQEPTELEKSGEQLSEEDLIDEQ. A disordered region spans residues 25–106; that stretch reads QQVQEPTELE…RSSMVRFGKR (82 aa). Phenylalanine amide occurs at positions 62, 75, 89, 103, 117, and 130. Leucine 143 bears the Leucine amide mark. Phenylalanine 157 carries the post-translational modification Phenylalanine amide. A propeptide spanning residues 161-177 is cleaved from the precursor; sequence SMEFEMQSNEKNIEDSE.

The protein belongs to the FARP (FMRFamide related peptide) family. As to expression, expressed in the ASI sensory neurons, the ALA interneuron and the AVG interneuron from where secretion occurs. Expression in the ASI neurons is necessary and sufficient to maintain serotonin-induced fat loss.

The protein localises to the secreted. Functionally, FMRFamide-like neuropeptides. Stimulates serotonin-induced fat loss by binding to and activating the npr-22 receptor which leads to induction of the atgl-1 lipase and subsequent fat loss. Together with atfs-1, negatively regulates the expression of the transcription regulator hlh-11, to promote expression of atgl-1, and thus atgl-1-dependent fat oxidation in response to mitochondrial stress. TPMQRSSMVRF-amide: Acts as a ligand for the npr-22 receptor in vitro. Its function is as follows. SPMQRSSMVRF-amide: Acts as a ligand for the npr-22 receptor in vitro. In terms of biological role, acts as a ligand for the npr-22 receptor in vitro. The protein is FMRFamide-like neuropeptides 7 of Caenorhabditis elegans.